Reading from the N-terminus, the 607-residue chain is Arginine--tRNA ligase (607 aa).

The short motif at proline 147 to histidine 157 is the 'HIGH' region element.

It belongs to the class-I aminoacyl-tRNA synthetase family. As to quaternary structure, monomer.

It is found in the cytoplasm. It carries out the reaction tRNA(Arg) + L-arginine + ATP = L-arginyl-tRNA(Arg) + AMP + diphosphate. In Prochlorococcus marinus (strain NATL2A), this protein is Arginine--tRNA ligase.